The primary structure comprises 328 residues: UPF0421 protein SSP0904 (328 aa).

4 consecutive transmembrane segments (helical) span residues Leu-26–Ile-46, Leu-61–Gln-81, Phe-84–Val-104, and Leu-132–Pro-152.

It belongs to the UPF0421 family.

It localises to the cell membrane. The protein is UPF0421 protein SSP0904 of Staphylococcus saprophyticus subsp. saprophyticus (strain ATCC 15305 / DSM 20229 / NCIMB 8711 / NCTC 7292 / S-41).